A 533-amino-acid chain; its full sequence is Tyrosine-protein kinase transforming protein Fps (533 aa).

A disordered region spans residues 1-46 (ASGQLHRPQPQEHTSTSAAAGTWRHTQASESRHRLPHCSAAPSHQD). Positions 11–29 (QEHTSTSAAAGTWRHTQAS) are enriched in polar residues. Residues 50 to 124 (MGFGPELWCP…LQEDRQSVCS (75 aa)) form the F-BAR; degenerate domain. One can recognise an SH2 domain in the interval 171-260 (WYHGAIPRSE…KSGIVLTRAV (90 aa)). One can recognise a Protein kinase domain in the interval 272–525 (VLLGERIGRG…PSFGAVHQDL (254 aa)). Residues 278-286 (IGRGNFGEV) and lysine 301 contribute to the ATP site. Catalysis depends on aspartate 394, which acts as the Proton acceptor. Tyrosine 424 carries the phosphotyrosine; by autocatalysis modification.

It belongs to the protein kinase superfamily. Tyr protein kinase family. Fes/fps subfamily.

The catalysed reaction is L-tyrosyl-[protein] + ATP = O-phospho-L-tyrosyl-[protein] + ADP + H(+). This is Tyrosine-protein kinase transforming protein Fps (V-FPS) from Gallus gallus (Chicken).